Here is a 447-residue protein sequence, read N- to C-terminus: Gamma-glutamyl phosphate reductase (447 aa).

The protein belongs to the gamma-glutamyl phosphate reductase family.

It is found in the cytoplasm. The enzyme catalyses L-glutamate 5-semialdehyde + phosphate + NADP(+) = L-glutamyl 5-phosphate + NADPH + H(+). It participates in amino-acid biosynthesis; L-proline biosynthesis; L-glutamate 5-semialdehyde from L-glutamate: step 2/2. Its function is as follows. Catalyzes the NADPH-dependent reduction of L-glutamate 5-phosphate into L-glutamate 5-semialdehyde and phosphate. The product spontaneously undergoes cyclization to form 1-pyrroline-5-carboxylate. This is Gamma-glutamyl phosphate reductase from Methanosarcina mazei (strain ATCC BAA-159 / DSM 3647 / Goe1 / Go1 / JCM 11833 / OCM 88) (Methanosarcina frisia).